A 369-amino-acid polypeptide reads, in one-letter code: Glycolate oxidase 1 (369 aa).

The FMN hydroxy acid dehydrogenase domain occupies 1-360 (MGEITNVMEY…TRAHIYTDAD (360 aa)). Y25 serves as a coordination point for glyoxylate. Residues 78 to 80 (PSA), S107, 128 to 130 (QLY), and T156 each bind FMN. Y130 is a binding site for glyoxylate. A glyoxylate-binding site is contributed by R165. 2 residues coordinate FMN: K231 and S253. Glyoxylate is bound by residues H255 and R258. The active-site Proton acceptor is H255. FMN is bound by residues 286-290 (DGGVR) and 309-310 (GR). Positions 367-369 (PRL) match the Microbody targeting signal motif.

The protein belongs to the FMN-dependent alpha-hydroxy acid dehydrogenase family. In terms of assembly, homotetramer. Interacts with rice dwarf virus (RDV) P8. This interaction promotes viral P8 relocation to virus factories peripheral to peroxisomes. It depends on FMN as a cofactor.

The protein localises to the peroxisome. It carries out the reaction glycolate + O2 = glyoxylate + H2O2. The protein operates within photosynthesis; photorespiration; glycine from 2-phosphoglycolate: step 2/3. Its function is as follows. Catalyzes the oxidation of glycolate to glyoxylate, with a reduction of O2 to H2O2. Is a key enzyme in photorespiration in plants. Can exert a strong regulation over photosynthesis, possibly through a feed-back inhibition on Rubisco activase. Does not seem to play a role in oxalate accumulation. This chain is Glycolate oxidase 1 (GLO1), found in Oryza sativa subsp. indica (Rice).